We begin with the raw amino-acid sequence, 305 residues long: Pseudouridine-5'-phosphate glycosidase (305 aa).

Glu22 serves as the catalytic Proton donor. Substrate-binding residues include Lys84 and Val104. Asp136 contributes to the Mn(2+) binding site. 138–140 (SAD) contributes to the substrate binding site. Residue Lys157 is the Nucleophile of the active site.

The protein belongs to the pseudouridine-5'-phosphate glycosidase family. As to quaternary structure, homotrimer. Mn(2+) is required as a cofactor.

The catalysed reaction is D-ribose 5-phosphate + uracil = psi-UMP + H2O. Catalyzes the reversible cleavage of pseudouridine 5'-phosphate (PsiMP) to ribose 5-phosphate and uracil. Functions biologically in the cleavage direction, as part of a pseudouridine degradation pathway. This is Pseudouridine-5'-phosphate glycosidase from Chloroflexus aurantiacus (strain ATCC 29364 / DSM 637 / Y-400-fl).